The chain runs to 63 residues: uncharacterized protein (63 aa).

A helical membrane pass occupies residues 15 to 37; it reads ISHCHLPLSPATAIAIIICFRIV.

It localises to the membrane. This is an uncharacterized protein from Saccharomyces cerevisiae (strain ATCC 204508 / S288c) (Baker's yeast).